A 739-amino-acid polypeptide reads, in one-letter code: Tegument protein UL47 (739 aa).

The segment covering 1-13 (MDAARDGRPERRR) has biased composition (basic and acidic residues). 2 disordered regions span residues 1–123 (MDAA…QDYL) and 154–198 (QFPP…DDAA). Positions 10–30 (ERRRAVSGTYRTHPFQRPSAR) match the Nuclear localization signal motif. Basic residues predominate over residues 28–53 (SARRSAGRPARCGRRGRGAPRVRRPR). Residues 62–87 (EDTSEDENVYDYIDGDSSDSADDYDS) show a composition bias toward acidic residues. The Nuclear export signal signature appears at 94–121 (RGPNHGAGDAMDTDAPPERAPEGGAPQD). Positions 483–493 (LSAYLTLFVAL) match the Nuclear export signal motif.

It belongs to the alphaherpesvirinae HHV-1 UL47 family. In terms of assembly, interacts with US3 kinase. Interacts with UL31 and UL34; these interactions seem important for efficient virion nuclear egress. Interacts with UL41/VHS. Interacts with host DDB1. Monoubiquitinated. Post-translationally, phosphorylated by US3. This phosphorylation is required for proper nuclear localization.

The protein resides in the virion tegument. Its subcellular location is the host nucleus. The protein localises to the host cytoplasm. Its function is as follows. Tegument protein that can bind to various RNA transcripts. Plays a role in the attenuation of selective viral and cellular mRNA degradation by modulating the activity of host shutoff RNase UL41/VHS. Also plays a role in the primary envelopment of virions in the perinuclear space, probably by interacting with two nuclear egress proteins UL31 and UL34. In Bovine herpesvirus 1.1 (strain Cooper) (BoHV-1), this protein is Tegument protein UL47.